A 249-amino-acid chain; its full sequence is MFTVIIPARFASTRLPGKPLADIHGKPMIVRVMERAKRSGAGRVIVATDNHDVVDAVVAAGGEACLTNENHHSGTERLAEVINKYQFSDDEIIVNVQGDEPLIPEEIIKQVAENLAGCKAGMATLAVQIHDAEEAFNPNAVKVVMDKQGYALYFSRATIPWERGRFIQSRETIGDNFLRHIGIYAYRAGFIRRYVQWEPSPLEQIEMLEQLRVLWYGEKIHVGIALKAPGVGVDTPEDLAAIRKVFTEI.

The protein belongs to the KdsB family.

It is found in the cytoplasm. It catalyses the reaction 3-deoxy-alpha-D-manno-oct-2-ulosonate + CTP = CMP-3-deoxy-beta-D-manno-octulosonate + diphosphate. It functions in the pathway nucleotide-sugar biosynthesis; CMP-3-deoxy-D-manno-octulosonate biosynthesis; CMP-3-deoxy-D-manno-octulosonate from 3-deoxy-D-manno-octulosonate and CTP: step 1/1. The protein operates within bacterial outer membrane biogenesis; lipopolysaccharide biosynthesis. Functionally, activates KDO (a required 8-carbon sugar) for incorporation into bacterial lipopolysaccharide in Gram-negative bacteria. This chain is 3-deoxy-manno-octulosonate cytidylyltransferase, found in Photorhabdus laumondii subsp. laumondii (strain DSM 15139 / CIP 105565 / TT01) (Photorhabdus luminescens subsp. laumondii).